The chain runs to 287 residues: Phosphatidylserine decarboxylase proenzyme (287 aa).

Residues Asp-89, His-146, and Ser-252 each act as charge relay system; for autoendoproteolytic cleavage activity in the active site. Ser-252 serves as the catalytic Schiff-base intermediate with substrate; via pyruvic acid; for decarboxylase activity. Ser-252 is subject to Pyruvic acid (Ser); by autocatalysis.

Belongs to the phosphatidylserine decarboxylase family. PSD-B subfamily. Prokaryotic type I sub-subfamily. In terms of assembly, heterodimer of a large membrane-associated beta subunit and a small pyruvoyl-containing alpha subunit. Requires pyruvate as cofactor. In terms of processing, is synthesized initially as an inactive proenzyme. Formation of the active enzyme involves a self-maturation process in which the active site pyruvoyl group is generated from an internal serine residue via an autocatalytic post-translational modification. Two non-identical subunits are generated from the proenzyme in this reaction, and the pyruvate is formed at the N-terminus of the alpha chain, which is derived from the carboxyl end of the proenzyme. The autoendoproteolytic cleavage occurs by a canonical serine protease mechanism, in which the side chain hydroxyl group of the serine supplies its oxygen atom to form the C-terminus of the beta chain, while the remainder of the serine residue undergoes an oxidative deamination to produce ammonia and the pyruvoyl prosthetic group on the alpha chain. During this reaction, the Ser that is part of the protease active site of the proenzyme becomes the pyruvoyl prosthetic group, which constitutes an essential element of the active site of the mature decarboxylase.

It localises to the cell membrane. The enzyme catalyses a 1,2-diacyl-sn-glycero-3-phospho-L-serine + H(+) = a 1,2-diacyl-sn-glycero-3-phosphoethanolamine + CO2. The protein operates within phospholipid metabolism; phosphatidylethanolamine biosynthesis; phosphatidylethanolamine from CDP-diacylglycerol: step 2/2. Catalyzes the formation of phosphatidylethanolamine (PtdEtn) from phosphatidylserine (PtdSer). This Shewanella woodyi (strain ATCC 51908 / MS32) protein is Phosphatidylserine decarboxylase proenzyme.